The chain runs to 313 residues: Short-chain dehydrogenase/reductase family 9C member 7 (313 aa).

An NADP(+)-binding site is contributed by 29-53; sequence FITGCDSGFGNLLARQLVDRGMRVL. Residue Ser-160 participates in substrate binding. Tyr-172 acts as the Proton acceptor in catalysis. Position 185 is a phosphoserine (Ser-185).

This sequence belongs to the short-chain dehydrogenases/reductases (SDR) family.

It localises to the cytoplasm. The enzyme catalyses a N-[omega-(9R,10R)-epoxy-(13R)-hydroxy-(11E)-octadecenoyloxy]acyl-beta-D-glucosyl-(1&lt;-&gt;1)-sphing-4E-enine + NAD(+) = a N-[omega-(9R,10R)-epoxy-13-oxo-(11E)-octadecenoyloxy]acyl-beta-D-glucosyl-(1&lt;-&gt;1)-sphing-4E-enine + NADH + H(+). It catalyses the reaction a N-[omega-(9R,10R)-epoxy-(13R)-hydroxy-(11E)-octadecenoyloxy]-acylsphing-4E-enine + NAD(+) = a N-[omega-(9R,10R)-epoxy-13-oxo-(11E)-octadecenoyloxy]-acylsphing-4E-enine + NADH + H(+). Plays a crucial role in the formation of the epidermal permeability barrier. Catalyzes the NAD+-dependent dehydrogenation of the linoleate 9,10-trans-epoxy-11E-13-alcohol esterified in omega-O-acylceramides (such as in N-[omega-(9R,10R)-epoxy-(13R)-hydroxy-(11E)-octadecenoyloxy]-acylsphing-4E-enine) to the corresponding 13-ketone, the reactive moiety required for binding of epidermal ceramides to proteins. Displays weak conversion of all-trans-retinal to all-trans-retinol in the presence of NADH. Has apparently no steroid dehydrogenase activity. The polypeptide is Short-chain dehydrogenase/reductase family 9C member 7 (SDR9C7) (Bos taurus (Bovine)).